Consider the following 405-residue polypeptide: Tryptophan synthase beta chain (405 aa).

Lys-95 carries the post-translational modification N6-(pyridoxal phosphate)lysine.

The protein belongs to the TrpB family. As to quaternary structure, tetramer of two alpha and two beta chains. It depends on pyridoxal 5'-phosphate as a cofactor.

It carries out the reaction (1S,2R)-1-C-(indol-3-yl)glycerol 3-phosphate + L-serine = D-glyceraldehyde 3-phosphate + L-tryptophan + H2O. It participates in amino-acid biosynthesis; L-tryptophan biosynthesis; L-tryptophan from chorismate: step 5/5. Functionally, the beta subunit is responsible for the synthesis of L-tryptophan from indole and L-serine. The chain is Tryptophan synthase beta chain (trpB) from Pseudomonas putida (Arthrobacter siderocapsulatus).